The sequence spans 331 residues: Glucan endo-1,3-beta-glucosidase, acidic isoform GL161 (331 aa).

The N-terminal stretch at 1-9 is a signal peptide; the sequence is MCSIQIIGA. Pyrrolidone carboxylic acid is present on Gln10. Asn55 and Asn75 each carry an N-linked (GlcNAc...) asparagine glycan. The active-site Nucleophile is Glu244.

It belongs to the glycosyl hydrolase 17 family. Is expressed primarily in epidermal cell of healthy plant, and following induction by ethylene, accumulates in mesophyll cells.

Its subcellular location is the secreted. The protein localises to the extracellular space. It carries out the reaction Hydrolysis of (1-&gt;3)-beta-D-glucosidic linkages in (1-&gt;3)-beta-D-glucans.. Its function is as follows. Is thought to be an important plant defense-related product against fungal pathogens. The polypeptide is Glucan endo-1,3-beta-glucosidase, acidic isoform GL161 (Nicotiana tabacum (Common tobacco)).